The sequence spans 78 residues: D-alanyl carrier protein (78 aa).

The 78-residue stretch at 1-78 (MDFNQEVLSV…QIIKQLNELR (78 aa)) folds into the Carrier domain. Residue Ser-36 is modified to O-(pantetheine 4'-phosphoryl)serine.

This sequence belongs to the DltC family. Post-translationally, 4'-phosphopantetheine is transferred from CoA to a specific serine of apo-DCP.

The protein localises to the cytoplasm. The protein operates within cell wall biogenesis; lipoteichoic acid biosynthesis. Carrier protein involved in the D-alanylation of lipoteichoic acid (LTA). The loading of thioester-linked D-alanine onto DltC is catalyzed by D-alanine--D-alanyl carrier protein ligase DltA. The DltC-carried D-alanyl group is further transferred to cell membrane phosphatidylglycerol (PG) by forming an ester bond, probably catalyzed by DltD. D-alanylation of LTA plays an important role in modulating the properties of the cell wall in Gram-positive bacteria, influencing the net charge of the cell wall. The protein is D-alanyl carrier protein of Bacillus licheniformis (strain ATCC 14580 / DSM 13 / JCM 2505 / CCUG 7422 / NBRC 12200 / NCIMB 9375 / NCTC 10341 / NRRL NRS-1264 / Gibson 46).